The following is a 1073-amino-acid chain: MGILSITDQPPLVQAIFNRDVEEVRSLLNQKENINVLDQERRTPLHTAAYIGDVAILELLILSGANVNAKDTVWLTPLHRAAASRNEKALHLLLKHSADVNARDKYWQTPLHVAAANRATKCVEAIIPLLSTVNVADRTGRTALHHAVHSGHLEMVNLLLNKGASLSTCDKKDRQPIHWAAFLGHLEVLKLLVARGADVMCKDKKGYTLLHTAAASGQIEVVRHLLRLGVEIDEPNSFGNTALHIACYMGQDAVANELVNYGANVNQPNEKGFTPLHFAAVSTNGALCLELLVNNGADVNFQSKEGKSPLHMAAIHGRFTRSQILIQNGSEIDCADKYGNTPLHVAARYGHELLISTLMTNGADTARRGIHDMFPLHLAVLFGFSDCCRKLLSSGQLYSIVSSLSNEHVLSAGFDINTPDNLGRTCLHAAASGGNVECLNLLLSSGADLRRRDKFGRTPLHYAAANGSYQCTVTLVTAGASINEADCKGCTPLHYAAASDTYRRAETHSGNSHDTDEEPLKESRMKEAFFCLEFLLDNGADPSLRDKQGYTAVHYAAAYGNRQNLELLLEMSFNCLEDVESTIPVSPLHLAAYNGHCEALKTLAETLVNLDVRDHKGRTALYLATERGSTECVEVLTSHGASALVKERKRKWTPLHAAAANGNTDSLHLLIDSGERADITDVMDIHGQTPLMLAIMNGHVDCVHLLLEKGSTADAADKRGRTALHRGAVTGCEDCLAALLDHDAFVLCRDFKGRTPIHFASACGHLEILRTLLQAALSTDPLDSVVDYSGYSPMHWASYSGHEDCLELLLEHNPFAYLEGNPFTPLHCAVINNQDSTAEMLVEALGAKIVNSRDAKGRTPLHAAAFADNIHGLQLLLRHQAEVDTTDKLGRTPLMMASENGHTAAVEFLLYQAKANITVLDVNKNTALHLACSKGHEKCALLILGETQDLGLINASNSALQMPLHIAARNGLATVVQALLSRGATVLAVDEEGHTPALACAPNKDVADCLALILSTMKPFPPKDAISSFSFNLLKNCGIAAKTAACGALPNGSTCPYSKDRHNAIGLDGCYSE.

ANK repeat units follow at residues 7–36 (TDQP…NINV), 40–69 (ERRT…NVNA), 73–102 (VWLT…DVNA), 106–135 (YWQT…TVNV), 139–168 (TGRT…SLST), 172–201 (KDRQ…DVMC), 205–234 (KGYT…EIDE), 238–267 (FGNT…NVNQ), 271–301 (KGFT…DVNF), 305–334 (EGKS…EIDC), 338–367 (YGNT…DTAR), 371–400 (HDMF…LYSI), 422–451 (LGRT…DLRR), 455–484 (FGRT…SINE), 488–544 (KGCT…DPSL), 548–578 (QGYT…CLED), 583–612 (IPVS…NLDV), 616–645 (KGRT…SALV), 650–679 (RKWT…RADI), 686–715 (HGQT…TADA), 719–748 (RGRT…FVLC), 752–781 (KGRT…STDP), 789–818 (SGYS…FAYL), 821–851 (NPFT…KIVN), 856–885 (KGRT…EVDT), 889–919 (LGRT…NITV), 923–952 (NKNT…DLGL), and 959–988 (ALQM…TVLA).

In terms of assembly, protein phosphatase 6 (PP6) holoenzyme is proposed to be a heterotrimeric complex formed by the catalytic subunit, a SAPS domain-containing subunit (PP6R) and an ankyrin repeat-domain containing regulatory subunit (ARS).

Putative regulatory subunit of protein phosphatase 6 (PP6) that may be involved in the recognition of phosphoprotein substrates. The polypeptide is Serine/threonine-protein phosphatase 6 regulatory ankyrin repeat subunit C (ANKRD52) (Gallus gallus (Chicken)).